Consider the following 496-residue polypeptide: NADH-ubiquinone oxidoreductase 51 kDa subunit, mitochondrial (496 aa).

The N-terminal 30 residues, 1–30, are a transit peptide targeting the mitochondrion; it reads MISRAAAPSSSIASLSSRSLRAQAPAARSF. NAD(+) is bound at residue 98–107; it reads GRGGAGFPSG. An FMN-binding site is contributed by 214–261; that stretch reads GMGAYVCGEETSLIESIEGKAGKPRLKPPFPAAVGLFGCPSTVTNVET. Residues C393, C396, C399, and C439 each contribute to the [4Fe-4S] cluster site.

The protein belongs to the complex I 51 kDa subunit family. Complex I is composed of about 40 different subunits. This is a component of the flavoprotein-sulfur (FP) fragment of the enzyme. It depends on FMN as a cofactor. [4Fe-4S] cluster is required as a cofactor.

It is found in the mitochondrion inner membrane. It catalyses the reaction a ubiquinone + NADH + 5 H(+)(in) = a ubiquinol + NAD(+) + 4 H(+)(out). In terms of biological role, core subunit of the mitochondrial membrane respiratory chain NADH dehydrogenase (Complex I) that is believed to belong to the minimal assembly required for catalysis. Complex I functions in the transfer of electrons from NADH to the respiratory chain. The immediate electron acceptor for the enzyme is believed to be ubiquinone. The sequence is that of NADH-ubiquinone oxidoreductase 51 kDa subunit, mitochondrial (NUO51) from Aspergillus niger.